Here is a 404-residue protein sequence, read N- to C-terminus: CCA-adding enzyme (404 aa).

2 residues coordinate ATP: glycine 27 and arginine 30. The CTP site is built by glycine 27 and arginine 30. Residues aspartate 40 and aspartate 42 each coordinate Mg(2+). Residues arginine 111, aspartate 154, arginine 157, arginine 160, and arginine 163 each coordinate ATP. CTP-binding residues include arginine 111, aspartate 154, arginine 157, arginine 160, and arginine 163.

It belongs to the tRNA nucleotidyltransferase/poly(A) polymerase family. Bacterial CCA-adding enzyme type 3 subfamily. Homodimer. Requires Mg(2+) as cofactor.

The catalysed reaction is a tRNA precursor + 2 CTP + ATP = a tRNA with a 3' CCA end + 3 diphosphate. The enzyme catalyses a tRNA with a 3' CCA end + 2 CTP + ATP = a tRNA with a 3' CCACCA end + 3 diphosphate. In terms of biological role, catalyzes the addition and repair of the essential 3'-terminal CCA sequence in tRNAs without using a nucleic acid template. Adds these three nucleotides in the order of C, C, and A to the tRNA nucleotide-73, using CTP and ATP as substrates and producing inorganic pyrophosphate. tRNA 3'-terminal CCA addition is required both for tRNA processing and repair. Also involved in tRNA surveillance by mediating tandem CCA addition to generate a CCACCA at the 3' terminus of unstable tRNAs. While stable tRNAs receive only 3'-terminal CCA, unstable tRNAs are marked with CCACCA and rapidly degraded. The chain is CCA-adding enzyme from Geobacillus sp. (strain WCH70).